The primary structure comprises 190 residues: MSIEWYAVHTYVGQEDRVQDQLMDRARRLGMYRTKIFQVLQPEEEAVEIQEGGKKVNVKRKLFPGYVFVQMDVEDDDAPGELGESWEVVRGTSGVTGFVGTATRPVPLSPEEVQRLLTSVGVAAQPVVEEAPRIKVDLKAGDMVRVTSGPFADFSGVVSEVNAPQAKVKVLVSIFGRETPVELDFSQVAK.

The 25-residue stretch at 141 to 165 (GDMVRVTSGPFADFSGVVSEVNAPQ) folds into the KOW domain.

This sequence belongs to the NusG family.

Functionally, participates in transcription elongation, termination and antitermination. In Deinococcus radiodurans (strain ATCC 13939 / DSM 20539 / JCM 16871 / CCUG 27074 / LMG 4051 / NBRC 15346 / NCIMB 9279 / VKM B-1422 / R1), this protein is Transcription termination/antitermination protein NusG.